The sequence spans 615 residues: Prickle planar cell polarity protein 3 (615 aa).

A compositionally biased stretch (basic residues) spans 1-12 (MFARGSRRRRSG). The interval 1 to 26 (MFARGSRRRRSGRAPPEAEDPDRGQP) is disordered. The PET domain occupies 74–182 (SDFQRHSISD…IVRIFPVTIT (109 aa)). 3 consecutive LIM zinc-binding domains span residues 184 to 249 (AICE…CLRP), 250 to 309 (RCQA…RHAE), and 310 to 373 (YCDG…SEPT). Disordered stretches follow at residues 396–567 (ASFS…LGER) and 587–615 (TFNS…CIVA). Residues 405 to 415 (SETTTKGTSTE) show a composition bias toward polar residues. Phosphoserine is present on residues Ser-475 and Ser-491. Over residues 508–531 (PSRRRHHHHNHHHHHNRHPSRRRH) the composition is skewed to basic residues. Positions 537-555 (GSGSDSESCSSSPSSSSSE) are enriched in low complexity. A compositionally biased stretch (basic and acidic residues) spans 606–615 (QARDKNCIVA).

This sequence belongs to the prickle / espinas / testin family. Interacts with VANGL2 via its C-terminus. The VANGL2-dependent membrane recruitment of PRICKLE3 is a prerequisite for its polarization. Interacts with WTIP. WTIP is involved in the recruitment of PRICKLE3 to the basal body. Interacts with MT-ATP8, a component of the mitochondrial complex V. As to expression, widely expressed.

The protein resides in the cytoplasm. It localises to the cell membrane. It is found in the mitochondrion. Involved in the planar cell polarity (PCP) pathway that is essential for the polarization of epithelial cells during morphogenetic processes, including gastrulation and neurulation. PCP is maintained by two molecular modules, the global and the core modules, PRICKLE3 being part of the core module. Distinct complexes of the core module segregate to opposite sides of the cell, where they interact with the opposite complex in the neighboring cell at or near the adherents junctions. Involved in the organization of the basal body. Involved in cilia growth and positioning. Required for proper assembly, stability, and function of mitochondrial membrane ATP synthase (mitochondrial complex V). The protein is Prickle planar cell polarity protein 3 of Homo sapiens (Human).